Reading from the N-terminus, the 184-residue chain is Trichothecene 15-O-acetyltransferase SAT16 (184 aa).

His154 lines the substrate pocket.

It belongs to the trichothecene O-acetyltransferase family.

The protein operates within mycotoxin biosynthesis. In terms of biological role, trichothecene 15-O-acetyltransferase; part of the satratoxin SC2 cluster involved in the biosynthesis of satratoxins, trichothecene mycotoxins that are associated with human food poisonings. Satratoxins are suggested to be made by products of multiple gene clusters (SC1, SC2 and SC3) that encode 21 proteins in all, including polyketide synthases, acetyltransferases, and other enzymes expected to modify the trichothecene skeleton. SC1 encodes 10 proteins, SAT1 to SAT10. The largest are SAT8, which encodes a putative polyketide synthase (PKS) with a conventional non-reducing architecture, and SAT10, a putative protein containing four ankyrin repeats and thus may be involved in protein scaffolding. The putative short-chain reductase SAT3 may assist the PKS in some capacity. SAT6 contains a secretory lipase domain and acts probably as a trichothecene esterase. SAT5 encodes a putative acetyltransferase, and so, with SAT6, may affect endogenous protection from toxicity. The probable transcription factor SAT9 may regulate the expression of the SC1 cluster. SC2 encodes proteins SAT11 to SAT16, the largest of which encodes the putative reducing PKS SAT13. SAT11 is a cytochrome P450 monooxygenase, while SAT14 and SAT16 are probable acetyltransferases. The SC2 cluster may be regulated by the transcription factor SAT15. SC3 is a small cluster that encodes 5 proteins, SAT17 to SAT21. SAT21 is a putative MFS-type transporter which may have a role in exporting secondary metabolites. The four other proteins putatively encoded in SC3 include the taurine hydroxylase-like protein SAT17, the O-methyltransferase SAT18, the acetyltransferase SAT19, and the Cys6-type zinc finger SAT20, the latter being probably involved in regulation of SC3 expression. The protein is Trichothecene 15-O-acetyltransferase SAT16 of Stachybotrys chartarum (strain CBS 109288 / IBT 7711) (Toxic black mold).